Consider the following 1477-residue polypeptide: Alpha-1-inhibitor 3 (1477 aa).

The signal sequence occupies residues 1 to 24 (MKKDREAQLCLFSALLAFLPFASL). A disulfide bridge connects residues C48 and C86. N-linked (GlcNAc...) asparagine glycans are attached at residues N55 and N247. Disulfide bonds link C251/C295 and C269/C283. N301, N321, N393, and N508 each carry an N-linked (GlcNAc...) asparagine glycan. Cystine bridges form between C468–C563, C595–C774, and C643–C678. Residues 601-750 (DQSVLLQKPE…TWIWDLVTVN (150 aa)) form a bait region (approximate) region. N-linked (GlcNAc...) asparagine glycosylation is found at N750, N777, and N872. Cystine bridges form between C850-C886, C924-C1324, C1082-C1130, and C1355-C1470. Residues 975–978 (CGEQ) constitute a cross-link (isoglutamyl cysteine thioester (Cys-Gln)). N994 is a glycosylation site (N-linked (GlcNAc...) asparagine). Residues N1143, N1314, and N1427 are each glycosylated (N-linked (GlcNAc...) asparagine).

This sequence belongs to the protease inhibitor I39 (alpha-2-macroglobulin) family. In terms of assembly, monomer.

The protein resides in the secreted. In terms of biological role, protease inhibitor with a wide spectrum of protein targets, which attaches through its thioester function. In Rattus norvegicus (Rat), this protein is Alpha-1-inhibitor 3 (A1i3).